A 303-amino-acid chain; its full sequence is N-acetyl-D-glucosamine kinase (303 aa).

ATP contacts are provided by residues 4–11 (GFDVGGTK) and 133–140 (GFGGGLVF). Zn(2+)-binding residues include His-157, Cys-177, Cys-179, and Cys-184.

Belongs to the ROK (NagC/XylR) family. NagK subfamily.

It catalyses the reaction N-acetyl-D-glucosamine + ATP = N-acetyl-D-glucosamine 6-phosphate + ADP + H(+). It functions in the pathway cell wall biogenesis; peptidoglycan recycling. In terms of biological role, catalyzes the phosphorylation of N-acetyl-D-glucosamine (GlcNAc) derived from cell-wall degradation, yielding GlcNAc-6-P. The polypeptide is N-acetyl-D-glucosamine kinase (Photobacterium profundum (strain SS9)).